The sequence spans 147 residues: UPF0251 protein NT01CX_1491 (147 aa).

Belongs to the UPF0251 family.

The protein is UPF0251 protein NT01CX_1491 of Clostridium novyi (strain NT).